Here is a 302-residue protein sequence, read N- to C-terminus: uncharacterized protein (302 aa).

It belongs to the HAD-like hydrolase superfamily.

It localises to the cytoplasm. Its subcellular location is the nucleus. This is an uncharacterized protein from Schizosaccharomyces pombe (strain 972 / ATCC 24843) (Fission yeast).